Reading from the N-terminus, the 539-residue chain is GMP synthase [glutamine-hydrolyzing] (539 aa).

A Glutamine amidotransferase type-1 domain is found at 4-202 (KILILDFGSQ…VLGICRAKAD (199 aa)). Cys81 serves as the catalytic Nucleophile. Active-site residues include His176 and Glu178. Positions 203–395 (WVMKDHIEEA…LGLPPEMVYR (193 aa)) constitute a GMPS ATP-PPase domain. Residue 230–236 (SGGVDSS) participates in ATP binding.

In terms of assembly, homodimer.

It catalyses the reaction XMP + L-glutamine + ATP + H2O = GMP + L-glutamate + AMP + diphosphate + 2 H(+). It functions in the pathway purine metabolism; GMP biosynthesis; GMP from XMP (L-Gln route): step 1/1. Its function is as follows. Catalyzes the synthesis of GMP from XMP. This Cupriavidus pinatubonensis (strain JMP 134 / LMG 1197) (Cupriavidus necator (strain JMP 134)) protein is GMP synthase [glutamine-hydrolyzing].